The sequence spans 279 residues: MVKYQYEFPLDKAGKAGAVKPYRGGKNDFVTPVSNLSGVAEILTNAALKATEAYSQLGQDRLGAVLISKVKGWAYADREGTLFIEESDNNNVWTTTAAVNVAAGVLTATDWVYLSKRYYRFRYVNGNLQQSEFVLYQSVGAGEMDVRVNEKTPLQIDFAENQTHDGRLKVEARKTFDFVFHENAESASEGAALPVDGAAHLLVEVYGTAEMSEVKFWGKSVSGQKLPIRGVKTDDATTASSTLGKAEAWAFDIKGFKEIIMEIISITGGTLSVKGTAVS.

To B.subtilis YqxG/YqdC.

In terms of biological role, not known; does not seem to be involved in host cell lysis. The chain is Phage-like element PBSX protein XepA (xepA) from Bacillus subtilis (strain 168).